The following is a 980-amino-acid chain: Conserved oligomeric Golgi complex subunit 1 (980 aa).

At A2 the chain carries N-acetylalanine. S7 bears the Phosphoserine mark.

The protein belongs to the COG1 family. Component of the conserved oligomeric Golgi complex which is composed of eight different subunits and is required for normal Golgi morphology and localization.

The protein resides in the golgi apparatus membrane. In terms of biological role, required for normal Golgi function. This Homo sapiens (Human) protein is Conserved oligomeric Golgi complex subunit 1 (COG1).